The sequence spans 658 residues: Protein CFAP20DC (658 aa).

2 disordered regions span residues 312 to 522 (QQGE…EEEY) and 589 to 634 (PVNQ…LDSS). Residues 319-328 (SHPVKQTTPL) are compositionally biased toward polar residues. Residues 339–349 (PPRDPSADKGS) show a composition bias toward basic and acidic residues. Low complexity-rich tracts occupy residues 351-363 (RRGL…SGSR) and 417-434 (SSGP…LLLD). The segment covering 494 to 506 (DPKEDSRVTKGDT) has biased composition (basic and acidic residues). Over residues 507 to 521 (ELEDDFYGSDSSEEE) the composition is skewed to acidic residues. Residues 625–634 (QPLEQSLDSS) show a composition bias toward polar residues.

In Rattus norvegicus (Rat), this protein is Protein CFAP20DC.